Here is a 239-residue protein sequence, read N- to C-terminus: Phosphoribosylaminoimidazole-succinocarboxamide synthase (239 aa).

The protein belongs to the SAICAR synthetase family.

The catalysed reaction is 5-amino-1-(5-phospho-D-ribosyl)imidazole-4-carboxylate + L-aspartate + ATP = (2S)-2-[5-amino-1-(5-phospho-beta-D-ribosyl)imidazole-4-carboxamido]succinate + ADP + phosphate + 2 H(+). The protein operates within purine metabolism; IMP biosynthesis via de novo pathway; 5-amino-1-(5-phospho-D-ribosyl)imidazole-4-carboxamide from 5-amino-1-(5-phospho-D-ribosyl)imidazole-4-carboxylate: step 1/2. This is Phosphoribosylaminoimidazole-succinocarboxamide synthase from Bacillus cereus (strain 03BB102).